A 526-amino-acid chain; its full sequence is Seipin-2 (526 aa).

The tract at residues 33–77 is disordered; the sequence is PIRSNSHQPSSLLRRRKSAHRRDLISSDIETEPSSSSDGFDVGEK. Low complexity predominate over residues 58-70; sequence SSDIETEPSSSSD. The next 4 helical transmembrane spans lie at 195–215, 224–243, 258–278, and 483–503; these read SLLT…FDPF, FLMA…MNPF, FGWG…LLVS, and LFVW…LVCC.

The protein belongs to the seipin family. In terms of tissue distribution, expressed in seeds, seedlings, leaves, stems and roots. Not detected in flowers.

It localises to the endoplasmic reticulum membrane. In terms of biological role, involved in lipid metabolism and lipid droplet (LD) morphology, number, and size. Supports the formation of small-sized LDs and modulates triacylglycerol accumulation. Induces probably a reorganization of the endoplasmic reticulum into LD-forming domains. The sequence is that of Seipin-2 from Arabidopsis thaliana (Mouse-ear cress).